We begin with the raw amino-acid sequence, 191 residues long: Calcium-activated potassium channel subunit beta-1 (191 aa).

Residues 2 to 18 lie on the Cytoplasmic side of the membrane; it reads GKKLVMAQRRGETRALC. The helical transmembrane segment at 19 to 39 threads the bilayer; that stretch reads LGVAMVVGAVITYYILGTTVL. Topologically, residues 40-157 are extracellular; sequence PLYQKSVWTQ…YRRLYGPQSL (118 aa). Residues Asn80 and Asn142 are each glycosylated (N-linked (GlcNAc...) asparagine). The helical transmembrane segment at 158 to 178 threads the bilayer; it reads LFSLFWPTFLLTGGLLIIVMV. Residues 179–191 lie on the Cytoplasmic side of the membrane; the sequence is KINQSLSILAAQR.

This sequence belongs to the KCNMB (TC 8.A.14.1) family. KCNMB1 subfamily. In terms of assembly, interacts with KCNMA1 tetramer. There are probably 4 molecules of KCMNB1 per KCNMA1 tetramer. In terms of processing, N-glycosylated.

Its subcellular location is the membrane. Functionally, regulatory subunit of the calcium activated potassium KCNMA1 (maxiK) channel. Modulates the calcium sensitivity and gating kinetics of KCNMA1, thereby contributing to KCNMA1 channel diversity. Increases the apparent Ca(2+)/voltage sensitivity of the KCNMA1 channel. It also modifies KCNMA1 channel kinetics and alters its pharmacological properties. It slows down the activation and the deactivation kinetics of the channel. Acts as a negative regulator of smooth muscle contraction by enhancing the calcium sensitivity to KCNMA1. Its presence is also a requirement for internal binding of the KCNMA1 channel opener dehydrosoyasaponin I (DHS-1) triterpene glycoside and for external binding of the agonist hormone 17-beta-estradiol (E2). Increases the binding activity of charybdotoxin (CTX) toxin to KCNMA1 peptide blocker by increasing the CTX association rate and decreasing the dissociation rate. The protein is Calcium-activated potassium channel subunit beta-1 (KCNMB1) of Bos taurus (Bovine).